We begin with the raw amino-acid sequence, 316 residues long: Glycine--tRNA ligase alpha subunit (316 aa).

It belongs to the class-II aminoacyl-tRNA synthetase family. In terms of assembly, tetramer of two alpha and two beta subunits.

It localises to the cytoplasm. The enzyme catalyses tRNA(Gly) + glycine + ATP = glycyl-tRNA(Gly) + AMP + diphosphate. The protein is Glycine--tRNA ligase alpha subunit of Cupriavidus taiwanensis (strain DSM 17343 / BCRC 17206 / CCUG 44338 / CIP 107171 / LMG 19424 / R1) (Ralstonia taiwanensis (strain LMG 19424)).